The primary structure comprises 37 residues: Potassium channel toxin alpha-KTx 2.19 (37 aa).

3 disulfide bridges follow: Cys-7-Cys-28, Cys-13-Cys-33, and Cys-17-Cys-35.

As to expression, expressed by the venom gland.

The protein localises to the secreted. Functionally, inhibitor of voltage-gated potassium channels. This chain is Potassium channel toxin alpha-KTx 2.19, found in Rhopalurus junceus (Caribbean blue scorpion).